The sequence spans 182 residues: ATP synthase subunit delta (182 aa).

It belongs to the ATPase delta chain family. As to quaternary structure, F-type ATPases have 2 components, F(1) - the catalytic core - and F(0) - the membrane proton channel. F(1) has five subunits: alpha(3), beta(3), gamma(1), delta(1), epsilon(1). F(0) has three main subunits: a(1), b(2) and c(10-14). The alpha and beta chains form an alternating ring which encloses part of the gamma chain. F(1) is attached to F(0) by a central stalk formed by the gamma and epsilon chains, while a peripheral stalk is formed by the delta and b chains.

The protein resides in the cell membrane. Its function is as follows. F(1)F(0) ATP synthase produces ATP from ADP in the presence of a proton or sodium gradient. F-type ATPases consist of two structural domains, F(1) containing the extramembraneous catalytic core and F(0) containing the membrane proton channel, linked together by a central stalk and a peripheral stalk. During catalysis, ATP synthesis in the catalytic domain of F(1) is coupled via a rotary mechanism of the central stalk subunits to proton translocation. This protein is part of the stalk that links CF(0) to CF(1). It either transmits conformational changes from CF(0) to CF(1) or is implicated in proton conduction. The polypeptide is ATP synthase subunit delta (Lactobacillus johnsonii (strain CNCM I-12250 / La1 / NCC 533)).